The chain runs to 246 residues: Carboxy-S-adenosyl-L-methionine synthase (246 aa).

Residues Tyr-39, 64–66 (GCS), 89–90 (DN), 117–118 (DI), Asn-132, and Arg-199 contribute to the S-adenosyl-L-methionine site.

The protein belongs to the class I-like SAM-binding methyltransferase superfamily. Cx-SAM synthase family. In terms of assembly, homodimer.

The enzyme catalyses prephenate + S-adenosyl-L-methionine = carboxy-S-adenosyl-L-methionine + 3-phenylpyruvate + H2O. In terms of biological role, catalyzes the conversion of S-adenosyl-L-methionine (SAM) to carboxy-S-adenosyl-L-methionine (Cx-SAM). The sequence is that of Carboxy-S-adenosyl-L-methionine synthase from Enterobacter sp. (strain 638).